Here is a 216-residue protein sequence, read N- to C-terminus: Cytochrome c biogenesis ATP-binding export protein CcmA (216 aa).

In terms of domain architecture, ABC transporter spans 5–216 (ISVDTLLSAS…RKIRLDYRFV (212 aa)). 43 to 50 (GPNGAGKT) is an ATP binding site.

It belongs to the ABC transporter superfamily. CcmA exporter (TC 3.A.1.107) family. As to quaternary structure, the complex is composed of two ATP-binding proteins (CcmA) and two transmembrane proteins (CcmB).

It is found in the cell inner membrane. It catalyses the reaction heme b(in) + ATP + H2O = heme b(out) + ADP + phosphate + H(+). In terms of biological role, part of the ABC transporter complex CcmAB involved in the biogenesis of c-type cytochromes; once thought to export heme, this seems not to be the case, but its exact role is uncertain. Responsible for energy coupling to the transport system. The protein is Cytochrome c biogenesis ATP-binding export protein CcmA of Shewanella oneidensis (strain ATCC 700550 / JCM 31522 / CIP 106686 / LMG 19005 / NCIMB 14063 / MR-1).